Here is a 324-residue protein sequence, read N- to C-terminus: Holliday junction branch migration complex subunit RuvB (324 aa).

Residues M1 to Y168 form a large ATPase domain (RuvB-L) region. Residues Y14, I15, G48, K51, T52, T53, D97, T146, Y168, and R205 each contribute to the ATP site. T52 is a binding site for Mg(2+). The tract at residues T169 to G239 is small ATPAse domain (RuvB-S). Positions E242–P324 are head domain (RuvB-H). DNA-binding residues include R297 and R302.

This sequence belongs to the RuvB family. As to quaternary structure, homohexamer. Forms a complex with RuvA. Electron microscopic images suggest 2 closely interacting RuvA tetramers sandwich the HJ DNA; each tetramer associates with an RuvB hexamer. Forms 2 complexes with Holliday junction (HJ) DNA which probably have 1 and 2 RuvA tetramers per complex (called complex I and complex II). Forms an RuvA(8)-RuvB(12)-Holliday junction (HJ) complex. HJ DNA is sandwiched between 2 RuvA tetramers; dsDNA enters through RuvA and exits via RuvB. An RuvB hexamer assembles on each DNA strand where it exits the tetramer. Each RuvB hexamer is contacted by two RuvA subunits (via domain III) on 2 adjacent RuvB subunits; this complex drives branch migration. In the full resolvosome a probable DNA-RuvA(4)-RuvB(12)-RuvC(2) complex forms which resolves the HJ. Requires Mg(2+) as cofactor.

The protein resides in the cytoplasm. The catalysed reaction is ATP + H2O = ADP + phosphate + H(+). With respect to regulation, the activity of RuvB is enhanced by E.coli RuvA. Functionally, the RuvA-RuvB-RuvC complex processes Holliday junction (HJ) DNA during genetic recombination and DNA repair, while the RuvA-RuvB complex plays an important role in the rescue of blocked DNA replication forks via replication fork reversal (RFR). RuvA specifically binds to HJ cruciform DNA, conferring on it an open structure. The RuvB hexamer acts as an ATP-dependent pump, pulling dsDNA into and through the RuvAB complex. RuvB forms 2 homohexamers on either side of HJ DNA bound by 1 or 2 RuvA tetramers; 4 subunits per hexamer contact DNA at a time. Coordinated motions by a converter formed by DNA-disengaged RuvB subunits stimulates ATP hydrolysis and nucleotide exchange. Immobilization of the converter enables RuvB to convert the ATP-contained energy into a lever motion, pulling 2 nucleotides of DNA out of the RuvA tetramer per ATP hydrolyzed, thus driving DNA branch migration. The RuvB motors rotate together with the DNA substrate, which together with the progressing nucleotide cycle form the mechanistic basis for DNA recombination by continuous HJ branch migration. Branch migration allows RuvC to scan DNA until it finds its consensus sequence, where it cleaves and resolves cruciform DNA. Its function is as follows. RuvB is a Mg(2+)-dependent, DNA-dependent ATPase with an equal preference for supercoiled and linear dsDNA; all (d)NTPs tested were efficiently hydrolyzed. Promotes Holliday junction (HJ) dissociation at 60 degrees Celsius in the presence of ATP but not ATP-gamma-S or ADP; (d)ATP, (d)CTP and dTTP also power dissociation in the absence of any RuvA. RuvA stimulates the ATPase of RuvB in the presence of dsDNA and HJ branch migration by RuvB. Excess RuvB stimulates some branch migration in vitro even in the presence of mutant RuvA. The sequence is that of Holliday junction branch migration complex subunit RuvB from Thermus thermophilus (strain ATCC 27634 / DSM 579 / HB8).